Consider the following 324-residue polypeptide: Autolytic lysozyme (324 aa).

Residues D5 and E91 contribute to the active site. 5 consecutive repeat copies span residues 212 to 234 (LLKR…IKDF), 235 to 254 (QSIM…SGAA), 255 to 277 (QQIF…TRYI), 278 to 300 (QYRV…VAAW), and 301 to 324 (QSNQ…LDEN). The interval 212-324 (LLKRGLEVDG…ATWSKLLDEN (113 aa)) is 5 X 23 AA tandem repeats.

Belongs to the glycosyl hydrolase 25 family. In terms of assembly, monomer.

It localises to the secreted. The protein localises to the cytoplasm. The catalysed reaction is Hydrolysis of (1-&gt;4)-beta-linkages between N-acetylmuramic acid and N-acetyl-D-glucosamine residues in a peptidoglycan and between N-acetyl-D-glucosamine residues in chitodextrins.. The protein is Autolytic lysozyme (lyc) of Clostridium acetobutylicum (strain ATCC 824 / DSM 792 / JCM 1419 / IAM 19013 / LMG 5710 / NBRC 13948 / NRRL B-527 / VKM B-1787 / 2291 / W).